The chain runs to 412 residues: MQQLIDNLKKRGILDNSSAGLESLTVPVSAYLGFDPTAPSLHIGHWIGICFLRRLAAYGITPVALVGGATGMIGDPSGKSVERSLLDQAQVLDNSKKIAAALASYLPGIRIVNNADWLGSLSMVDFLRDVGKHFRLGSMLAKDVVKQRVYSEEGISYTEFSYLLLQSYDFAHLFKEHNVVLQCGGSDQWGNITSGIDYIRRRGLGQAYGLTYPLLTDSKGKKIGKTESGTIWLDPALTPPYELFQYFLRLPDQEISKVMRTLTLLDNEEIFALDERLTSDPQAVKKYIAEVIVKDVHGSEGLAQAQAATESFFASKGKSITEAELVALVESGVGVKVARADLIGKRWLDIVVELGFCSSRGQARRLIQQRGLYINQEPLADEQSILDGTQLCFDRYVLLSQGKRKKQVIDLN.

Residue Y31 participates in L-tyrosine binding. A 'HIGH' region motif is present at residues P36 to H45. L-tyrosine is bound by residues Y162 and Q166. The 'KMSKS' region signature appears at K222–T226. ATP is bound at residue K225. The 67-residue stretch at K345–L411 folds into the S4 RNA-binding domain.

It belongs to the class-I aminoacyl-tRNA synthetase family. TyrS type 1 subfamily. Homodimer.

Its subcellular location is the cytoplasm. The catalysed reaction is tRNA(Tyr) + L-tyrosine + ATP = L-tyrosyl-tRNA(Tyr) + AMP + diphosphate + H(+). In terms of biological role, catalyzes the attachment of tyrosine to tRNA(Tyr) in a two-step reaction: tyrosine is first activated by ATP to form Tyr-AMP and then transferred to the acceptor end of tRNA(Tyr). This chain is Tyrosine--tRNA ligase, found in Chlamydia trachomatis serovar L2 (strain ATCC VR-902B / DSM 19102 / 434/Bu).